The primary structure comprises 224 residues: N-(5'-phosphoribosyl)anthranilate isomerase (224 aa).

It belongs to the TrpF family.

It carries out the reaction N-(5-phospho-beta-D-ribosyl)anthranilate = 1-(2-carboxyphenylamino)-1-deoxy-D-ribulose 5-phosphate. It functions in the pathway amino-acid biosynthesis; L-tryptophan biosynthesis; L-tryptophan from chorismate: step 3/5. The sequence is that of N-(5'-phosphoribosyl)anthranilate isomerase from Allorhizobium ampelinum (strain ATCC BAA-846 / DSM 112012 / S4) (Agrobacterium vitis (strain S4)).